A 660-amino-acid polypeptide reads, in one-letter code: RalBP1-associated Eps domain-containing protein 2 (660 aa).

Positions 34–147 (EQQCYSELFA…RFMMSKNDGE (114 aa)) constitute an EH 1 domain. The segment at 169-208 (EKNSFKRMDDEDKQQETQSPTMSPLASPPSSPPHYQRVPL) is disordered. Residue Ser-254 is modified to Phosphoserine. Residues 282-373 (QREYYVNQFR…LQPEYLQAAF (92 aa)) form the EH 2 domain. Residues 315–350 (LSIPELSYIWELSDADCDGALTLPEFCAAFHLIVAR) form the EF-hand domain. Ca(2+) is bound by residues Asp-328, Asp-330, Asp-332, and Glu-339. The segment at 433-616 (NEALPKDVSE…KQKKAIQTAI (184 aa)) is disordered. Thr-479 carries the post-translational modification Phosphothreonine. Ser-493 carries the post-translational modification Phosphoserine. Positions 512 to 523 (LPPPPALPPRPC) are enriched in pro residues. An interaction with RALBP1 region spans residues 514–660 (PPPALPPRPC…LEQLRPVTVL (147 aa)). The segment at 561–660 (PPSKPIRRKF…LEQLRPVTVL (100 aa)) is interaction with ASAP1. The segment covering 582 to 594 (PSTAASGPASAAT) has biased composition (low complexity). A coiled-coil region spans residues 601–657 (VQKQSSKQKKAIQTAIRKNKEANAVLARLNSELQQQLKEVHQERIALENQLEQLRPV).

As to quaternary structure, interacts with EPN1; the interaction is direct. Interacts with EPS15; the interaction is direct. Interacts with EPS15L1. Interacts with RALBP1; can form a ternary complex with activated Ral (RALA or RALB). Interacts with ASAP1; the interaction is direct and this complex can bind paxillin. Also forms a ternary complex with RALBP1 and ASAP1. Interacts with GRB2. Post-translationally, tyrosine-phosphorylated upon stimulation of cells with EGF. Phosphorylation on Tyr-residues induces its association with the EGF receptor probably indirectly through an adapter like GRB2. In terms of tissue distribution, expressed at high levels in the cerebrum, cerebellum, lung, kidney, and testis. Weakly expressed in the kidney. Isoform 2 is down-regulated during progression of prostate cancer.

Its subcellular location is the cytoplasm. In terms of biological role, involved in ligand-dependent receptor mediated endocytosis of the EGF and insulin receptors as part of the Ral signaling pathway. By controlling growth factor receptors endocytosis may regulate cell survival. Through ASAP1 may regulate cell adhesion and migration. The protein is RalBP1-associated Eps domain-containing protein 2 (REPS2) of Homo sapiens (Human).